Consider the following 874-residue polypeptide: Alanine--tRNA ligase (874 aa).

Histidine 562, histidine 566, cysteine 664, and histidine 668 together coordinate Zn(2+).

This sequence belongs to the class-II aminoacyl-tRNA synthetase family. The cofactor is Zn(2+).

It localises to the cytoplasm. It carries out the reaction tRNA(Ala) + L-alanine + ATP = L-alanyl-tRNA(Ala) + AMP + diphosphate. Catalyzes the attachment of alanine to tRNA(Ala) in a two-step reaction: alanine is first activated by ATP to form Ala-AMP and then transferred to the acceptor end of tRNA(Ala). Also edits incorrectly charged Ser-tRNA(Ala) and Gly-tRNA(Ala) via its editing domain. In Shewanella oneidensis (strain ATCC 700550 / JCM 31522 / CIP 106686 / LMG 19005 / NCIMB 14063 / MR-1), this protein is Alanine--tRNA ligase.